The sequence spans 694 residues: Katanin p80 WD40 repeat-containing subunit B1 (694 aa).

WD repeat units follow at residues 18 to 58, 61 to 100, 103 to 142, 145 to 186, 188 to 226, and 229 to 269; these read AHSS…CIMS, GHTSAVGCIQFNSSEERVVAGSLSGSLRLWDLEAAKILRT, GHKASISSLDFHPMGEYLASGSVDSNIKLWDVRRKGCVFR, GHTQ…TEFT, HTSAVNVVQFHPNEYLLASGSADRTVKLWDLEKFNMIGS, and GETG…DVVH. 2 disordered regions span residues 319–410 and 470–492; these read KPIP…PFPA and TTSASSPSRPVVNTTKPKPSTGI. Positions 327-349 are enriched in polar residues; the sequence is ALGTTLRRNYERPTTSCTGQEMK. Residues 350 to 378 show a composition bias toward basic and acidic residues; the sequence is QSSEADRRSPEGERRSPSSEDEKEDKESS. Residues 470–481 are compositionally biased toward low complexity; it reads TTSASSPSRPVV. A compositionally biased stretch (polar residues) spans 482 to 492; sequence NTTKPKPSTGI.

This sequence belongs to the WD repeat KATNB1 family. In terms of assembly, interacts with katna1. This interaction enhances the microtubule binding and severing activity of katna1 and also targets this activity to the centrosome.

The protein resides in the cytoplasm. Its subcellular location is the cytoskeleton. It localises to the microtubule organizing center. It is found in the centrosome. The protein localises to the spindle pole. The protein resides in the spindle. Participates in a complex which severs microtubules in an ATP-dependent manner. May act to target the enzymatic subunit of this complex to sites of action such as the centrosome. Microtubule severing may promote rapid reorganization of cellular microtubule arrays and the release of microtubules from the centrosome following nucleation. The chain is Katanin p80 WD40 repeat-containing subunit B1 (katnb1) from Danio rerio (Zebrafish).